The sequence spans 225 residues: GTP cyclohydrolase III (225 aa).

It belongs to the archaeal-type GTP cyclohydrolase family.

It catalyses the reaction GTP + 3 H2O = 2-amino-5-formylamino-6-(5-phospho-D-ribosylamino)pyrimidin-4(3H)-one + 2 phosphate + 2 H(+). In terms of biological role, catalyzes the formation of 2-amino-5-formylamino-6-ribofuranosylamino-4(3H)-pyrimidinone ribonucleotide monophosphate and inorganic phosphate from GTP. Also has an independent pyrophosphate phosphohydrolase activity. This is GTP cyclohydrolase III from Sulfurisphaera tokodaii (strain DSM 16993 / JCM 10545 / NBRC 100140 / 7) (Sulfolobus tokodaii).